A 420-amino-acid polypeptide reads, in one-letter code: FLYWCH transcription factor 3 (420 aa).

Positions 87–104 (SSTSPDSQPSSSSSVMSS) are enriched in low complexity. Disordered regions lie at residues 87–107 (SSTSPDSQPSSSSSVMSSTDE) and 119–138 (KINKAQRQSSPNSSKPYTPR). Residues 123–134 (AQRQSSPNSSKP) are compositionally biased toward polar residues. An FLYWCH-type zinc finger spans residues 140–195 (IRERVLFDEHLYVFDKCSYDSKKRFFRCERKNTCPARIHTPFDAERVIHKVQVHNH).

Its function is as follows. Probable transcription factor. May bind to the promoters of target genes, including micro-RNA genes, in order to repress expression, and acting redundantly with flh-2. The chain is FLYWCH transcription factor 3 from Caenorhabditis elegans.